The primary structure comprises 328 residues: Ferredoxin--NADP reductase 1 (328 aa).

Residues Glu-37, Lys-45, Tyr-49, Val-89, and Thr-310 each contribute to the FAD site.

This sequence belongs to the ferredoxin--NADP reductase type 2 family. As to quaternary structure, homodimer. FAD is required as a cofactor.

The catalysed reaction is 2 reduced [2Fe-2S]-[ferredoxin] + NADP(+) + H(+) = 2 oxidized [2Fe-2S]-[ferredoxin] + NADPH. The sequence is that of Ferredoxin--NADP reductase 1 from Latilactobacillus sakei subsp. sakei (strain 23K) (Lactobacillus sakei subsp. sakei).